The following is a 337-amino-acid chain: Interferon gamma receptor 2 (337 aa).

A signal peptide spans 1 to 21; that stretch reads MRPTLLWSLLLLLGVFAAAAA. At 28-247 the chain is on the extracellular side; sequence SQLPAPQHPK…MADASTELQQ (220 aa). Positions 31–129 constitute a Fibronectin type-III 1 domain; that stretch reads PAPQHPKIRL…GALHSAWVTM (99 aa). N-linked (GlcNAc...) asparagine glycans are attached at residues N56 and N85. A disulfide bridge connects residues C86 and C94. N-linked (GlcNAc...) asparagine glycosylation is found at N110, N137, N219, and N231. Residues 142–240 form the Fibronectin type-III 2 domain; that stretch reads PPENIEVTPG…NISCYETMAD (99 aa). A disulfide bridge connects residues C209 and C234. Residues 248 to 268 traverse the membrane as a helical segment; sequence VILISVGTFSLLSVLAGACFF. At 269 to 337 the chain is on the cytoplasmic side; the sequence is LVLKYRGLIK…KEQEDVLQTL (69 aa). The short motif at 276 to 277 is the Dileucine internalization motif element; that stretch reads LI.

It belongs to the type II cytokine receptor family. In terms of assembly, heterodimer with IFNGR1, to form the IFNG receptor complex. Interacts (via intracellular domain) with JAK2. Expressed in T-cells (at protein level).

The protein resides in the cell membrane. It localises to the cytoplasmic vesicle membrane. Its subcellular location is the golgi apparatus membrane. It is found in the endoplasmic reticulum membrane. The protein localises to the cytoplasm. Its function is as follows. Associates with IFNGR1 to form a receptor for the cytokine interferon gamma (IFNG). Ligand binding stimulates activation of the JAK/STAT signaling pathway. Required for signal transduction in contrast to other receptor subunit responsible for ligand binding. This chain is Interferon gamma receptor 2, found in Homo sapiens (Human).